We begin with the raw amino-acid sequence, 205 residues long: MSDIKLNYHKTHFLTSAPDIRALPEDSGIEIAFAGRSNAGKSTALNALTNQKSLARTSKTPGRTQLINLFEVEPQCRLVDLPGYGYAAVPEQMKIQWQKALGEYLQKRQCLAGVVILMDIRHPLKDLDQQMIEWAVASELPVLLLLTKADKLSQSARSKQVKMVREAILPFQGDVQVEAFSALNKTGIDRLAAKLDSWFAPVLSE.

Residues 27 to 201 (SGIEIAFAGR…AAKLDSWFAP (175 aa)) form the EngB-type G domain. Residues 35 to 42 (GRSNAGKS), 62 to 66 (GRTQL), 80 to 83 (DLPG), 147 to 150 (TKAD), and 180 to 182 (FSA) contribute to the GTP site. Positions 42 and 64 each coordinate Mg(2+).

It belongs to the TRAFAC class TrmE-Era-EngA-EngB-Septin-like GTPase superfamily. EngB GTPase family. Requires Mg(2+) as cofactor.

Its function is as follows. Necessary for normal cell division and for the maintenance of normal septation. This Pasteurella multocida (strain Pm70) protein is Probable GTP-binding protein EngB.